The chain runs to 198 residues: Capsid protein (198 aa).

Its subcellular location is the virion. This chain is Capsid protein, found in Vitis vinifera (Grape).